The chain runs to 498 residues: ATP synthase subunit beta, chloroplastic (498 aa).

172–179 (GGAGVGKT) contacts ATP.

Belongs to the ATPase alpha/beta chains family. In terms of assembly, F-type ATPases have 2 components, CF(1) - the catalytic core - and CF(0) - the membrane proton channel. CF(1) has five subunits: alpha(3), beta(3), gamma(1), delta(1), epsilon(1). CF(0) has four main subunits: a(1), b(1), b'(1) and c(9-12).

The protein localises to the plastid. It localises to the chloroplast thylakoid membrane. It carries out the reaction ATP + H2O + 4 H(+)(in) = ADP + phosphate + 5 H(+)(out). In terms of biological role, produces ATP from ADP in the presence of a proton gradient across the membrane. The catalytic sites are hosted primarily by the beta subunits. This Cinnamomum camphora (Camphor tree) protein is ATP synthase subunit beta, chloroplastic.